Consider the following 73-residue polypeptide: Large ribosomal subunit protein bL31 (73 aa).

4 residues coordinate Zn(2+): C16, C18, C37, and C40.

Belongs to the bacterial ribosomal protein bL31 family. Type A subfamily. As to quaternary structure, part of the 50S ribosomal subunit. Zn(2+) is required as a cofactor.

Functionally, binds the 23S rRNA. The polypeptide is Large ribosomal subunit protein bL31 (Pseudomonas fluorescens (strain ATCC BAA-477 / NRRL B-23932 / Pf-5)).